Consider the following 626-residue polypeptide: MTYSILTESIYNFKKKSSLDMQFLSPKNFQIENFTKIHDQTLPLKPFKTNRTAVAVVPPLPIFSPELYKRQNKLKKTQNATIFSMGTSAFKNQVKYNLETYHRSNQDTCLIHKPAVKEGDWVEVGDLLADSASSIGGELAIGHNIIVAYMPWEGYNYEDAILINERLVYEDIYTSIHIERYEVTTKETKLGFEQITREIPDISENEIKHLDKTGIAKIGSWVEEGDILVGKITPFNIKTLTPQQKLLYKIFDKQLSTTKDSSLRAPKGIKANVININILARQKIQINTKSKNTGKGSKPPRASKAQNTMVSQPSYIHIYLAEKRKMQVGDKMAGRHGNKGIVSRILPRQDMPFLPDGAAVDIVLNPLGVPSRMNVGQIYECLLGLAGRYLGEHYKIPPFDEMYGADASRSFVLSKLYEARKKTGLKWLLDPNHPGKIRLFDGRNSECFDQTVTVGIAYVLKLVHMVDDKMHARSTGPYSLVTQQPLRGRSKQGGQRLGEMEVWAIEGYGAAFVLSEMLTIKSDDMTGRQNLWKNLIENKEISLGSPESFKVLICELQALCLDIGLFRKNKETSLPYFKMPGEESKTNVNANLTGVQSSKKLEANSQTVKNSSMPNLVEIDNLLNLA.

A disordered region spans residues 287-307 (NTKSKNTGKGSKPPRASKAQN).

It belongs to the RNA polymerase beta chain family. As to quaternary structure, in plastids the minimal PEP RNA polymerase catalytic core is composed of four subunits: alpha, beta, beta', and beta''. When a (nuclear-encoded) sigma factor is associated with the core the holoenzyme is formed, which can initiate transcription.

It localises to the plastid. It is found in the chloroplast. The catalysed reaction is RNA(n) + a ribonucleoside 5'-triphosphate = RNA(n+1) + diphosphate. DNA-dependent RNA polymerase catalyzes the transcription of DNA into RNA using the four ribonucleoside triphosphates as substrates. This is DNA-directed RNA polymerase subunit beta C-terminal section (rpoB2) from Chlamydomonas reinhardtii (Chlamydomonas smithii).